We begin with the raw amino-acid sequence, 566 residues long: Beta-1,4 N-acetylgalactosaminyltransferase 2 (566 aa).

The ER exit and post-Golgi subcellular localization stretch occupies residues 1–22; sequence MGSAGFSVGKFHVEVASRGREC. Residues 1–67 lie on the Cytoplasmic side of the membrane; it reads MGSAGFSVGK…HGRSRRQGSR (67 aa). A Vesicular targeting motif is present at residues 9 to 15; sequence GKFHVEV. Residues 68–88 traverse the membrane as a helical; Signal-anchor for type II membrane protein segment; sequence FLWLLKILVIILVLGIVGFMF. The Lumenal portion of the chain corresponds to 89 to 566; that stretch reads GSMFLQAVFS…YFKNHLQCAA (478 aa).

This sequence belongs to the glycosyltransferase 2 family. As to quaternary structure, homodimer; disulfide-linked. As to expression, widely expressed. Highly expressed in colon and to a lesser extent in kidney, stomach, ileum and rectum.

The protein resides in the golgi apparatus. The protein localises to the trans-Golgi network membrane. It localises to the cytoplasmic vesicle membrane. The catalysed reaction is an N-acetyl-alpha-neuraminyl-(2-&gt;3)-beta-D-galactosyl derivative + UDP-N-acetyl-alpha-D-galactosamine = an N-acetyl-beta-D-galactosaminyl-(1-&gt;4)-[N-acetyl-alpha-neuraminyl-(2-&gt;3)]-beta-D-galactosyl derivative + UDP + H(+). The enzyme catalyses a 3-O-{alpha-Neu5Ac-(2-&gt;3)-beta-D-Gal-(1-&gt;3)-[alpha-Neu5Ac-(2-&gt;6)]-alpha-D-GalNAc}-L-seryl-[protein] + UDP-N-acetyl-alpha-D-galactosamine = a 3-O-{[alpha-Neu5Ac-(2-&gt;3)]-beta-D-GalNAc-(1-&gt;4)-beta-D-Gal-(1-&gt;3)-[alpha-Neu5Ac-(2-&gt;6)]-alpha-D-GalNAc}-L-seryl-[protein] + UDP + H(+). It carries out the reaction a 3-O-{alpha-Neu5Ac-(2-&gt;3)-beta-D-Gal-(1-&gt;3)-[alpha-Neu5Ac-(2-&gt;6)]-alpha-D-GalNAc}-L-threonyl-[protein] + UDP-N-acetyl-alpha-D-galactosamine = a 3-O-{[alpha-Neu5Ac-(2-&gt;3)]-beta-D-GalNAc-(1-&gt;4)-beta-D-Gal-(1-&gt;3)-[alpha-Neu5Ac-(2-&gt;6)]-alpha-D-GalNAc}-L-threonyl-[protein] + UDP + H(+). It catalyses the reaction a neolactoside IV(3)-alpha-NeuAc-nLc4Cer + UDP-N-acetyl-alpha-D-galactosamine = a neolactoside IV(4)-GalNAc,IV(3)-alpha-NeuAc-nLc4Cer + UDP + H(+). It participates in protein modification; protein glycosylation. The protein operates within glycolipid biosynthesis. Beta-1,4 N-acetylgalactosaminyltransferase involved in the biosynthesis of Sd(a) histo-blood group antigen. Catalyzes the transfer of N-acetylgalactosamine (GalNAc) group in a beta-1,4-linkage from UDP-GalNAc to the galactose residue of NeuAcalpha2-&gt;3Gal-R to form Sd(a) glycan epitope GalNAcbeta1-&gt;4(NeuAcalpha2-&gt;3)Gal-R. The Sd(a) epitope is carried in O- and N-linked glycoproteins and glycolipids, including O-linked core 1 structures on GYPA/glycophorin, SLC4A1 and SLC29A1 in erythrocytes, N-linked glycans attached to the Tamm-Horsfall glycoprotein UMOD/uromodulin in renal fluids, O-linked core 3 glycans on mucins in colon and neolactosides in gastric mucosa. Confers protection against influenza A virus strains that attach to NeuAcalpha2-&gt;3-carrying host receptors. Modifies N-glycan chains on host receptors and prevents virus entry into cells. This is Beta-1,4 N-acetylgalactosaminyltransferase 2 from Homo sapiens (Human).